A 573-amino-acid polypeptide reads, in one-letter code: Hemagglutinin-neuraminidase (573 aa).

The Intravirion portion of the chain corresponds to 1–27 (MQDSHGNTQILNQANSMVKRTWRLLFR). The chain crosses the membrane as a helical span at residues 28 to 48 (IATLILLVSIFVLSLIIVLQS). Residues 49–573 (TPGNLQNDIN…DFQITLFLAA (525 aa)) are Virion surface-facing. Cystine bridges form between cysteine 173–cysteine 197, cysteine 187–cysteine 248, and cysteine 239–cysteine 252. The involved in neuraminidase activity stretch occupies residues 235–240 (NRKSCS). N-linked (GlcNAc...) asparagine; by host glycans are attached at residues asparagine 258, asparagine 330, asparagine 339, and asparagine 347. 3 disulfides stabilise this stretch: cysteine 345–cysteine 466, cysteine 377–cysteine 387, and cysteine 460–cysteine 470. The N-linked (GlcNAc...) asparagine; by host glycan is linked to asparagine 433. N-linked (GlcNAc...) asparagine; by host glycosylation is found at asparagine 502 and asparagine 530. An intrachain disulfide couples cysteine 540 to cysteine 551.

The protein belongs to the paramyxoviruses hemagglutinin-neuraminidase family. As to quaternary structure, homotetramer; composed of disulfide-linked homodimers. Interacts with F protein trimer.

It is found in the virion membrane. It localises to the host cell membrane. It carries out the reaction Hydrolysis of alpha-(2-&gt;3)-, alpha-(2-&gt;6)-, alpha-(2-&gt;8)- glycosidic linkages of terminal sialic acid residues in oligosaccharides, glycoproteins, glycolipids, colominic acid and synthetic substrates.. Its function is as follows. Attaches the virus to sialic acid-containing cell receptors and thereby initiating infection. Binding of HN protein to the receptor induces a conformational change that allows the F protein to trigger virion/cell membranes fusion. Functionally, neuraminidase activity ensures the efficient spread of the virus by dissociating the mature virions from the neuraminic acid containing glycoproteins. This is Hemagglutinin-neuraminidase (HN) from Homo sapiens (Human).